A 277-amino-acid chain; its full sequence is Large ribosomal subunit protein uL2 (277 aa).

Residues 222–277 are disordered; the sequence is GVAMNPVDHPHGGGEGRTSGGRHPVTPWGKPTKGKKTRSNKATDKFIMRSRHQRKK.

The protein belongs to the universal ribosomal protein uL2 family. Part of the 50S ribosomal subunit. Forms a bridge to the 30S subunit in the 70S ribosome.

Its function is as follows. One of the primary rRNA binding proteins. Required for association of the 30S and 50S subunits to form the 70S ribosome, for tRNA binding and peptide bond formation. It has been suggested to have peptidyltransferase activity; this is somewhat controversial. Makes several contacts with the 16S rRNA in the 70S ribosome. This is Large ribosomal subunit protein uL2 from Brucella ovis (strain ATCC 25840 / 63/290 / NCTC 10512).